Here is a 413-residue protein sequence, read N- to C-terminus: MRILIVDDENTKVVEICGVLRDAQITEESITVATTAASALKELKESYFDLLIIDMYLPNRIGEAPSLSGGVDLLKRINRGNDVQLPEHILGLTSNLEALAASEEDFSARSWFVEEVGPSKTTWKLRLMEKLQYLKAREEYQGNQSKSEIISTRPECEVLFVCALLDPELTALHAVSGCDWEVVTFPGDPGIYWSASLKFGANTVSAICVCLPQMGLVAAGVTAAKAITLFKPKLVVMTGICAGRKGDCDLGDIIGANLTWDYGSGKFTEVAGAVVFEPAPFQAAATARVGGVLAELSNDNELLQKLYKESPGYRPAKVPKFHVAPLASGAAVQNHKEFFSGVVTQQRKMLGVDMEAFAIAWACHEALEPQPSWLVIKSVVDFADGTKDSQIQSFGSYISASLAIYAVDRLINR.

Positions Arg2–Glu129 constitute a Response regulatory domain. A 4-aspartylphosphate modification is found at Asp54.

This is an uncharacterized protein from Sinorhizobium fredii (strain NBRC 101917 / NGR234).